The primary structure comprises 136 residues: Large ribosomal subunit protein uL16 (136 aa).

It belongs to the universal ribosomal protein uL16 family. Part of the 50S ribosomal subunit.

Its function is as follows. Binds 23S rRNA and is also seen to make contacts with the A and possibly P site tRNAs. The protein is Large ribosomal subunit protein uL16 of Rickettsia africae (strain ESF-5).